A 171-amino-acid chain; its full sequence is uncharacterized protein (171 aa).

This is an uncharacterized protein from Ureaplasma parvum serovar 3 (strain ATCC 700970).